The primary structure comprises 37 residues: uncharacterized protein (37 aa).

Residues 1–21 (MQDLEIFLSIFAFIFVFYFGA) form a helical membrane-spanning segment.

It localises to the endoplasmic reticulum membrane. This is an uncharacterized protein from Saccharomyces cerevisiae (strain ATCC 204508 / S288c) (Baker's yeast).